We begin with the raw amino-acid sequence, 449 residues long: ATP-dependent protease ATPase subunit HslU (449 aa).

ATP-binding positions include I18, 60–65, D261, E327, and R399; that span reads GVGKTE.

This sequence belongs to the ClpX chaperone family. HslU subfamily. In terms of assembly, a double ring-shaped homohexamer of HslV is capped on each side by a ring-shaped HslU homohexamer. The assembly of the HslU/HslV complex is dependent on binding of ATP.

The protein resides in the cytoplasm. In terms of biological role, ATPase subunit of a proteasome-like degradation complex; this subunit has chaperone activity. The binding of ATP and its subsequent hydrolysis by HslU are essential for unfolding of protein substrates subsequently hydrolyzed by HslV. HslU recognizes the N-terminal part of its protein substrates and unfolds these before they are guided to HslV for hydrolysis. This is ATP-dependent protease ATPase subunit HslU from Oleidesulfovibrio alaskensis (strain ATCC BAA-1058 / DSM 17464 / G20) (Desulfovibrio alaskensis).